Consider the following 387-residue polypeptide: Phosphoglycerate kinase (387 aa).

Residues 21-23 (DLN), arginine 36, 59-62 (HLGR), arginine 113, and arginine 146 each bind substrate. Residues lysine 197, glutamate 314, and 340–343 (GGDT) contribute to the ATP site.

It belongs to the phosphoglycerate kinase family. Monomer.

The protein resides in the cytoplasm. It carries out the reaction (2R)-3-phosphoglycerate + ATP = (2R)-3-phospho-glyceroyl phosphate + ADP. It functions in the pathway carbohydrate degradation; glycolysis; pyruvate from D-glyceraldehyde 3-phosphate: step 2/5. The protein is Phosphoglycerate kinase of Yersinia pestis bv. Antiqua (strain Antiqua).